The sequence spans 251 residues: Imidazole glycerol phosphate synthase subunit HisF (251 aa).

Active-site residues include D11 and D130.

It belongs to the HisA/HisF family. As to quaternary structure, heterodimer of HisH and HisF.

It localises to the cytoplasm. The catalysed reaction is 5-[(5-phospho-1-deoxy-D-ribulos-1-ylimino)methylamino]-1-(5-phospho-beta-D-ribosyl)imidazole-4-carboxamide + L-glutamine = D-erythro-1-(imidazol-4-yl)glycerol 3-phosphate + 5-amino-1-(5-phospho-beta-D-ribosyl)imidazole-4-carboxamide + L-glutamate + H(+). It functions in the pathway amino-acid biosynthesis; L-histidine biosynthesis; L-histidine from 5-phospho-alpha-D-ribose 1-diphosphate: step 5/9. In terms of biological role, IGPS catalyzes the conversion of PRFAR and glutamine to IGP, AICAR and glutamate. The HisF subunit catalyzes the cyclization activity that produces IGP and AICAR from PRFAR using the ammonia provided by the HisH subunit. In Phocaeicola vulgatus (strain ATCC 8482 / DSM 1447 / JCM 5826 / CCUG 4940 / NBRC 14291 / NCTC 11154) (Bacteroides vulgatus), this protein is Imidazole glycerol phosphate synthase subunit HisF.